Here is a 148-residue protein sequence, read N- to C-terminus: Cystatin-C (148 aa).

Positions 1-28 (MARSLGVPLLLLAALVVALALAVSPAAG) are cleaved as a signal peptide. Positions 83-87 (QIVSG) match the Secondary area of contact motif. 2 disulfides stabilise this stretch: C101/C111 and C125/C145.

This sequence belongs to the cystatin family.

It is found in the secreted. This is a thiol proteinase inhibitor. The sequence is that of Cystatin-C (CST3) from Oryctolagus cuniculus (Rabbit).